A 149-amino-acid chain; its full sequence is Large ribosomal subunit protein uL22c (149 aa).

It belongs to the universal ribosomal protein uL22 family. Part of the 50S ribosomal subunit.

The protein localises to the plastid. Its subcellular location is the chloroplast. In terms of biological role, this protein binds specifically to 23S rRNA. Functionally, the globular domain of the protein is located near the polypeptide exit tunnel on the outside of the subunit, while an extended beta-hairpin is found that lines the wall of the exit tunnel in the center of the 70S ribosome. The chain is Large ribosomal subunit protein uL22c (rpl22) from Hordeum vulgare (Barley).